The chain runs to 32 residues: Dermaseptin-L1 (32 aa).

Expressed by the skin glands.

Its subcellular location is the secreted. Functionally, antimicrobial peptide active against the Gram-negative bacterium E.coli (MIC=8 uM) but inactive against the Gram-positive bacterium S.aureus. Also inhibits growth of zoospores of the chytrid fungus B.dendrobatidis at high concentrations (above 25 uM). Shows anticancer activities since it is cytolytic against HepG2 human hepatoma-derived cells (LC(50)=45 uM). Is only weakly hemolytic on human erythrocytes. This Agalychnis lemur (Lemur leaf frog) protein is Dermaseptin-L1.